The chain runs to 183 residues: Protein Syd (183 aa).

Belongs to the Syd family.

The protein resides in the cell inner membrane. Its function is as follows. Interacts with the SecY protein in vivo. May bind preferentially to an uncomplexed state of SecY, thus functioning either as a chelating agent for excess SecY in the cell or as a regulatory factor that negatively controls the translocase function. This Aliivibrio fischeri (strain ATCC 700601 / ES114) (Vibrio fischeri) protein is Protein Syd.